A 425-amino-acid chain; its full sequence is MKNTTLYTYRDYFVIRGGKPLTGKVKISGAKNAALPIMFATILTEEPCTITNVPDLLDVRNTLLLLRELGAELEFLNNTVFINPSINSFITNQEIIRRMRASVLSLGPLLGRFGRAVVGLPGGCSIGARPIDQHLKFFKEAGADVEVREGYVYVNLKEKRRVHFKFDLVTVTGTENALLYLASVPEESILENIALEPEVMDLIEVLKKMGAHVKVEGRSAYVKGSENLKGFTHSVIPDRIEAGTFMVGAVLTDGEILLENARINHLRAVVEKLKLIGGEVVEENGNLRVFRKESLRACDIETQVYPGFPTDMQAQFMALLSVAKGKSRIKENIFEHRFHHAQELNRLGANITVRGNTAYVEGVERLYGSEVYSTDLRASASLVLAGLVAQGETVVRDVYHLDRGYEKLEEKLKKLGADIERVSEL.

31–32 (KN) contacts phosphoenolpyruvate. Residue R100 participates in UDP-N-acetyl-alpha-D-glucosamine binding. C124 serves as the catalytic Proton donor. C124 is subject to 2-(S-cysteinyl)pyruvic acid O-phosphothioketal. Residues 129–133 (RPIDQ), 170–172 (TVT), D311, and I333 contribute to the UDP-N-acetyl-alpha-D-glucosamine site.

The protein belongs to the EPSP synthase family. MurA subfamily.

Its subcellular location is the cytoplasm. It carries out the reaction phosphoenolpyruvate + UDP-N-acetyl-alpha-D-glucosamine = UDP-N-acetyl-3-O-(1-carboxyvinyl)-alpha-D-glucosamine + phosphate. It participates in cell wall biogenesis; peptidoglycan biosynthesis. In terms of biological role, cell wall formation. Adds enolpyruvyl to UDP-N-acetylglucosamine. The sequence is that of UDP-N-acetylglucosamine 1-carboxyvinyltransferase from Aquifex aeolicus (strain VF5).